The chain runs to 436 residues: Phosphoribosylamine--glycine ligase (436 aa).

In terms of domain architecture, ATP-grasp spans 106-318 (RKLFEDYDIE…LADVCQAIVD (213 aa)). 133-196 (LDDFDRDVVV…EERLIGEEFT (64 aa)) serves as a coordination point for ATP. Mg(2+)-binding residues include Q276, E288, and N290. Residues Q276, E288, and N290 each contribute to the Mn(2+) site.

The protein belongs to the GARS family. Mg(2+) serves as cofactor. The cofactor is Mn(2+).

The enzyme catalyses 5-phospho-beta-D-ribosylamine + glycine + ATP = N(1)-(5-phospho-beta-D-ribosyl)glycinamide + ADP + phosphate + H(+). The protein operates within purine metabolism; IMP biosynthesis via de novo pathway; N(1)-(5-phospho-D-ribosyl)glycinamide from 5-phospho-alpha-D-ribose 1-diphosphate: step 2/2. The chain is Phosphoribosylamine--glycine ligase from Methanobrevibacter smithii (strain ATCC 35061 / DSM 861 / OCM 144 / PS).